The chain runs to 90 residues: MARTVQCVLLKKEADGLDFSPYPGELGKRIYEQVSKEAWQQWLKHQTMLVNENRLNLADARARQYLARQMERYFFGEGADQPTGYVPPTA.

This sequence belongs to the Fe(2+)-trafficking protein family.

In terms of biological role, could be a mediator in iron transactions between iron acquisition and iron-requiring processes, such as synthesis and/or repair of Fe-S clusters in biosynthetic enzymes. The sequence is that of Probable Fe(2+)-trafficking protein from Leptothrix cholodnii (strain ATCC 51168 / LMG 8142 / SP-6) (Leptothrix discophora (strain SP-6)).